The following is a 907-amino-acid chain: Phosphoenolpyruvate carboxylase (907 aa).

Active-site residues include histidine 138 and lysine 570.

It belongs to the PEPCase type 1 family. Requires Mg(2+) as cofactor.

The enzyme catalyses oxaloacetate + phosphate = phosphoenolpyruvate + hydrogencarbonate. In terms of biological role, forms oxaloacetate, a four-carbon dicarboxylic acid source for the tricarboxylic acid cycle. The polypeptide is Phosphoenolpyruvate carboxylase (Streptococcus mutans serotype c (strain ATCC 700610 / UA159)).